Reading from the N-terminus, the 115-residue chain is Basic leucine zipper transcriptional factor ATF-like (115 aa).

Residues 1-60 (MQQESDRNEQGYSSSPPSSNKQDSSDDTKKNHRREKNRIAAQKSRQRQTEKADSLHIESE) form a disordered region. A compositionally biased stretch (low complexity) spans 13-22 (SSSPPSSNKQ). In terms of domain architecture, bZIP spans 27-90 (DTKKNHRREK…KYLTCVLSTH (64 aa)). Positions 29-51 (KKNHRREKNRIAAQKSRQRQTEK) are basic motif. Positions 47-60 (RQTEKADSLHIESE) are enriched in basic and acidic residues. Positions 55–83 (LHIESENLERLNSALRGEISGLREELKYL) are leucine-zipper.

The protein belongs to the bZIP family.

It localises to the nucleus. The protein resides in the cytoplasm. AP-1 family transcription factor that controls the differentiation of lineage-specific cells in the immune system: specifically mediates the differentiation of T-helper 17 cells (Th17), follicular T-helper cells (TfH), CD8(+) dendritic cells and class-switch recombination (CSR) in B-cells. This chain is Basic leucine zipper transcriptional factor ATF-like (batf), found in Xenopus laevis (African clawed frog).